The sequence spans 523 residues: MAIEQIIEEVLPYLTKWYTILFGAAFTYFLSIALRNKYYEYKLKCENPPYFKTAGFVGIPGLIDVIKAKNAGKLADYADQTFDEYPHHSFYMTVAGMLKIVLTVDPENIKAVLATQFNDFALGARHAHFDPLLGDGIFTLDGEGWKHSRAMLRPQFAREQIAHVKALEPHVQVLAKQIKLNKGETFDLQELFFRFTVDTATEFLFGESVHSLYDEKLGVPPPNNIPGRENFAKAFNTSQHYLATRTYSQMFYFLTNPKEFRDCNAKVHKLAQYFVNKALDASEDEVAEKSKGGYVFLYELVKQTRDPKVLQDQLLNIMVAGRDTTAGLLSFAMFELARNPKIWNKLREEIEVNFGLGEEARVDEISFETLKKCEYLKAVLNETLRMYPSVPVNFRTATRDTTLPRGGGKDGTSPIFVPKGSSVVYTVYKTHRLEEYYGKDAYEFRPERWFEPSTRKLGWAYVPFNGGPRICLGQQFALTEASYVITRLAQMFEHLESKDETYPPNKCIHLTMNHNEGVFISAK.

Residues 17 to 34 (WYTILFGAAFTYFLSIAL) traverse the membrane as a helical segment. Cys-471 provides a ligand contact to heme.

Belongs to the cytochrome P450 family. The cofactor is heme.

It is found in the membrane. Functionally, together with an NADPH cytochrome P450 the enzyme system catalyzes the terminal hydroxylation as the first step in the assimilation of alkanes and fatty acids. This Candida maltosa (Yeast) protein is Cytochrome P450 52A3-B (CYP52A3-B).